A 425-amino-acid polypeptide reads, in one-letter code: Serine--tRNA ligase (425 aa).

Position 231–233 (231–233 (TAE)) interacts with L-serine. Residues 262–264 (RTE) and Val278 contribute to the ATP site. Residue Glu285 participates in L-serine binding. 349-352 (EVTS) contacts ATP. Thr384 serves as a coordination point for L-serine.

The protein belongs to the class-II aminoacyl-tRNA synthetase family. Type-1 seryl-tRNA synthetase subfamily. In terms of assembly, homodimer. The tRNA molecule binds across the dimer.

It is found in the cytoplasm. The enzyme catalyses tRNA(Ser) + L-serine + ATP = L-seryl-tRNA(Ser) + AMP + diphosphate + H(+). The catalysed reaction is tRNA(Sec) + L-serine + ATP = L-seryl-tRNA(Sec) + AMP + diphosphate + H(+). It functions in the pathway aminoacyl-tRNA biosynthesis; selenocysteinyl-tRNA(Sec) biosynthesis; L-seryl-tRNA(Sec) from L-serine and tRNA(Sec): step 1/1. Catalyzes the attachment of serine to tRNA(Ser). Is also able to aminoacylate tRNA(Sec) with serine, to form the misacylated tRNA L-seryl-tRNA(Sec), which will be further converted into selenocysteinyl-tRNA(Sec). In Dictyoglomus thermophilum (strain ATCC 35947 / DSM 3960 / H-6-12), this protein is Serine--tRNA ligase.